A 178-amino-acid polypeptide reads, in one-letter code: Large ribosomal subunit protein uL6 (178 aa).

The protein belongs to the universal ribosomal protein uL6 family. As to quaternary structure, part of the 50S ribosomal subunit.

Its function is as follows. This protein binds to the 23S rRNA, and is important in its secondary structure. It is located near the subunit interface in the base of the L7/L12 stalk, and near the tRNA binding site of the peptidyltransferase center. In Helicobacter pylori (strain P12), this protein is Large ribosomal subunit protein uL6.